Here is a 258-residue protein sequence, read N- to C-terminus: Small ribosomal subunit protein mS40 (258 aa).

The N-terminal 35 residues, 1–35, are a transit peptide targeting the mitochondrion; that stretch reads MAASILNVLLRRLPGVSPFRGAYGVQVLLQTLCTK. At S49 the chain carries Phosphoserine. The disordered stretch occupies residues 223–258; the sequence is RLREESGPPPELMPEVPLTAPAEASSTEPGAPQSAL.

This sequence belongs to the bacterial ribosomal protein bS18 family. Mitochondrion-specific ribosomal protein mS40 subfamily. In terms of assembly, component of the mitochondrial ribosome small subunit (28S) which comprises a 12S rRNA and about 30 distinct proteins.

Its subcellular location is the mitochondrion. This is Small ribosomal subunit protein mS40 (MRPS18B) from Sus scrofa (Pig).